The following is a 308-amino-acid chain: D-alanine--D-alanine ligase (308 aa).

Positions 103–302 (KTVMKTAGVP…FDELVQWMVE (200 aa)) constitute an ATP-grasp domain. Position 130-184 (130-184 (MEPPYVIKPVADGSSVGVYIITEQHQHPPQELFRDDWAYGDKLLVEKYVAGKELT)) interacts with ATP. Residues D252, E269, and N271 each contribute to the Mg(2+) site.

Belongs to the D-alanine--D-alanine ligase family. Mg(2+) serves as cofactor. Mn(2+) is required as a cofactor.

The protein resides in the cytoplasm. It catalyses the reaction 2 D-alanine + ATP = D-alanyl-D-alanine + ADP + phosphate + H(+). It participates in cell wall biogenesis; peptidoglycan biosynthesis. Functionally, cell wall formation. This is D-alanine--D-alanine ligase from Rhodopseudomonas palustris (strain BisA53).